A 121-amino-acid chain; its full sequence is Flagellar protein FliT (121 aa).

Residues 1-50 (MNHAPHLYFAWQQLVEKSQLMLRLATEEQWDELIASEMAYVNAVQEIAHL) are required for homodimerization. The tract at residues 60–98 (MQEQLRPMLRLILDNESKVKQLLQIRMDELAKLVGQSSV) is fliD binding.

Belongs to the FliT family. Homodimer. Interacts with FliD and FlhC.

Its subcellular location is the cytoplasm. It localises to the cytosol. Functionally, dual-function protein that regulates the transcription of class 2 flagellar operons and that also acts as an export chaperone for the filament-capping protein FliD. As a transcriptional regulator, acts as an anti-FlhDC factor; it directly binds FlhC, thus inhibiting the binding of the FlhC/FlhD complex to class 2 promoters, resulting in decreased expression of class 2 flagellar operons. As a chaperone, effects FliD transition to the membrane by preventing its premature polymerization, and by directing it to the export apparatus. This chain is Flagellar protein FliT, found in Escherichia coli O139:H28 (strain E24377A / ETEC).